A 463-amino-acid polypeptide reads, in one-letter code: Dialkyldecalin synthase (463 aa).

FAD contacts are provided by residues valine 13, 32-33 (ER), isoleucine 121, and aspartate 275.

It belongs to the PheA/TfdB FAD monooxygenase family. Homodimer. It depends on FAD as a cofactor.

The catalysed reaction is 4-[(2E,7S,8E,10E,13R,14R,16E,18E)-14-ethyl-7,13-dihydroxy-2,16,18-trimethylicosa-2,8,10,16,18-pentaenoyl]-2-methylidene-5-oxo-2,5-dihydro-1H-pyrrol-3-olate = 4-[(1R,2R,4aS,5S,8aR)-2-[(2R,3R,5E,7E)-3-ethyl-2-hydroxy-5,7-dimethylnona-5,7-dien-1-yl]-5-hydroxy-1-methyl-1,2,4a,5,6,7,8,8a-octahydronaphthalene-1-carbonyl]-2-methylidene-5-oxo-2,5-dihydro-1H-pyrrol-3-olate. It functions in the pathway antibiotic biosynthesis. In terms of biological role, involved in the biosynthesis of the spirotetramate antibiotics pyrroindomycins. Catalyzes the intramolecular cyclization forming the dialkyldecalin moiety in pyrroindomycins, via an endo-selective [4+2] cycloaddition reaction. The protein is Dialkyldecalin synthase of Streptomyces rugosporus.